Reading from the N-terminus, the 268-residue chain is tRNA pseudouridine synthase A (268 aa).

Asp-52 functions as the Nucleophile in the catalytic mechanism. Position 113 (Tyr-113) interacts with substrate.

This sequence belongs to the tRNA pseudouridine synthase TruA family. In terms of assembly, homodimer.

It catalyses the reaction uridine(38/39/40) in tRNA = pseudouridine(38/39/40) in tRNA. In terms of biological role, formation of pseudouridine at positions 38, 39 and 40 in the anticodon stem and loop of transfer RNAs. This chain is tRNA pseudouridine synthase A, found in Chlamydia abortus (strain DSM 27085 / S26/3) (Chlamydophila abortus).